Reading from the N-terminus, the 287-residue chain is uncharacterized protein (287 aa).

A signal peptide spans 1–31 (MLGSMALKLRKWIWASIPSLALILSSCSALV).

The protein belongs to the MG439/MG440 family.

This is an uncharacterized protein from Mycoplasma pneumoniae (strain ATCC 29342 / M129 / Subtype 1) (Mycoplasmoides pneumoniae).